The chain runs to 459 residues: Putrescine aminotransferase (459 aa).

Pyridoxal 5'-phosphate is bound by residues 150–151 (GT) and Q274. N6-(pyridoxal phosphate)lysine is present on K300. T332 lines the pyridoxal 5'-phosphate pocket.

The protein belongs to the class-III pyridoxal-phosphate-dependent aminotransferase family. Putrescine aminotransferase subfamily. It depends on pyridoxal 5'-phosphate as a cofactor.

The catalysed reaction is an alkane-alpha,omega-diamine + 2-oxoglutarate = an omega-aminoaldehyde + L-glutamate. It carries out the reaction putrescine + 2-oxoglutarate = 1-pyrroline + L-glutamate + H2O. It catalyses the reaction cadaverine + 2-oxoglutarate = 5-aminopentanal + L-glutamate. It participates in amine and polyamine degradation; putrescine degradation; 4-aminobutanal from putrescine (transaminase route): step 1/1. In terms of biological role, catalyzes the aminotransferase reaction from putrescine to 2-oxoglutarate, leading to glutamate and 4-aminobutanal, which spontaneously cyclizes to form 1-pyrroline. This is the first step in one of two pathways for putrescine degradation, where putrescine is converted into 4-aminobutanoate (gamma-aminobutyrate or GABA) via 4-aminobutanal. Also functions as a cadaverine transaminase in a a L-lysine degradation pathway to succinate that proceeds via cadaverine, glutarate and L-2-hydroxyglutarate. This is Putrescine aminotransferase from Shigella flexneri serotype 5b (strain 8401).